A 260-amino-acid chain; its full sequence is Octanoyltransferase (260 aa).

The region spanning Pro-42 to Ala-241 is the BPL/LPL catalytic domain. Residues Arg-97 to His-104, Ala-172 to Gly-174, and Gly-185 to Ala-187 contribute to the substrate site. The active-site Acyl-thioester intermediate is Cys-203.

This sequence belongs to the LipB family.

The protein localises to the cytoplasm. The enzyme catalyses octanoyl-[ACP] + L-lysyl-[protein] = N(6)-octanoyl-L-lysyl-[protein] + holo-[ACP] + H(+). It participates in protein modification; protein lipoylation via endogenous pathway; protein N(6)-(lipoyl)lysine from octanoyl-[acyl-carrier-protein]: step 1/2. Its function is as follows. Catalyzes the transfer of endogenously produced octanoic acid from octanoyl-acyl-carrier-protein onto the lipoyl domains of lipoate-dependent enzymes. Lipoyl-ACP can also act as a substrate although octanoyl-ACP is likely to be the physiological substrate. The polypeptide is Octanoyltransferase (Synechococcus sp. (strain JA-3-3Ab) (Cyanobacteria bacterium Yellowstone A-Prime)).